A 613-amino-acid polypeptide reads, in one-letter code: UvrABC system protein C (613 aa).

Residues 20–98 (ERPGVYLMYD…IKRHKPRYNI (79 aa)) enclose the GIY-YIG domain. The UVR domain occupies 209–244 (FDVIESLGHKMQQASDEFEFEKAALYRDKISALRAI).

Belongs to the UvrC family. In terms of assembly, interacts with UvrB in an incision complex.

Its subcellular location is the cytoplasm. Its function is as follows. The UvrABC repair system catalyzes the recognition and processing of DNA lesions. UvrC both incises the 5' and 3' sides of the lesion. The N-terminal half is responsible for the 3' incision and the C-terminal half is responsible for the 5' incision. In Hydrogenovibrio crunogenus (strain DSM 25203 / XCL-2) (Thiomicrospira crunogena), this protein is UvrABC system protein C.